Reading from the N-terminus, the 360-residue chain is DNA polymerase IV (360 aa).

The UmuC domain occupies 6 to 187 (IIHVDMDAFY…LKIGDLHGVG (182 aa)). Aspartate 10 and aspartate 105 together coordinate Mg(2+). Glutamate 106 is a catalytic residue.

The protein belongs to the DNA polymerase type-Y family. Monomer. The cofactor is Mg(2+).

The protein localises to the cytoplasm. The enzyme catalyses DNA(n) + a 2'-deoxyribonucleoside 5'-triphosphate = DNA(n+1) + diphosphate. Its function is as follows. Poorly processive, error-prone DNA polymerase involved in untargeted mutagenesis. Copies undamaged DNA at stalled replication forks, which arise in vivo from mismatched or misaligned primer ends. These misaligned primers can be extended by PolIV. Exhibits no 3'-5' exonuclease (proofreading) activity. May be involved in translesional synthesis, in conjunction with the beta clamp from PolIII. This is DNA polymerase IV from Exiguobacterium sibiricum (strain DSM 17290 / CCUG 55495 / CIP 109462 / JCM 13490 / 255-15).